We begin with the raw amino-acid sequence, 689 residues long: Glycine--tRNA ligase beta subunit (689 aa).

The protein belongs to the class-II aminoacyl-tRNA synthetase family. Tetramer of two alpha and two beta subunits.

The protein resides in the cytoplasm. It carries out the reaction tRNA(Gly) + glycine + ATP = glycyl-tRNA(Gly) + AMP + diphosphate. The protein is Glycine--tRNA ligase beta subunit of Photobacterium profundum (strain SS9).